Consider the following 326-residue polypeptide: Vitamin B12 import system permease protein BtuC (326 aa).

9 helical membrane passes run 15 to 35 (WLLS…CAGE), 61 to 81 (LAVL…QALF), 88 to 108 (PGLL…VLLG), 112 to 132 (LPGW…TLIL), 146 to 166 (LLAG…AIYF), 184 to 204 (GGVD…LIWI), 240 to 260 (GWMV…GLVI), 274 to 294 (VLLP…DVVA), and 302 to 322 (ELPI…WLLL).

It belongs to the binding-protein-dependent transport system permease family. FecCD subfamily. As to quaternary structure, the complex is composed of two ATP-binding proteins (BtuD), two transmembrane proteins (BtuC) and a solute-binding protein (BtuF).

The protein resides in the cell inner membrane. Functionally, part of the ABC transporter complex BtuCDF involved in vitamin B12 import. Involved in the translocation of the substrate across the membrane. In Salmonella enteritidis PT4 (strain P125109), this protein is Vitamin B12 import system permease protein BtuC.